The sequence spans 450 residues: Glucose-6-phosphate isomerase (450 aa).

The Proton donor role is filled by Glu-290. Active-site residues include His-311 and Lys-425.

The protein belongs to the GPI family.

Its subcellular location is the cytoplasm. The catalysed reaction is alpha-D-glucose 6-phosphate = beta-D-fructose 6-phosphate. It functions in the pathway carbohydrate biosynthesis; gluconeogenesis. It participates in carbohydrate degradation; glycolysis; D-glyceraldehyde 3-phosphate and glycerone phosphate from D-glucose: step 2/4. Its function is as follows. Catalyzes the reversible isomerization of glucose-6-phosphate to fructose-6-phosphate. This Listeria monocytogenes serovar 1/2a (strain ATCC BAA-679 / EGD-e) protein is Glucose-6-phosphate isomerase.